The primary structure comprises 218 residues: dTTP/UTP pyrophosphatase (218 aa).

Aspartate 76 (proton acceptor) is an active-site residue.

This sequence belongs to the Maf family. YhdE subfamily. The cofactor is a divalent metal cation.

The protein resides in the cytoplasm. It carries out the reaction dTTP + H2O = dTMP + diphosphate + H(+). It catalyses the reaction UTP + H2O = UMP + diphosphate + H(+). Its function is as follows. Nucleoside triphosphate pyrophosphatase that hydrolyzes dTTP and UTP. May have a dual role in cell division arrest and in preventing the incorporation of modified nucleotides into cellular nucleic acids. In Cytophaga hutchinsonii (strain ATCC 33406 / DSM 1761 / CIP 103989 / NBRC 15051 / NCIMB 9469 / D465), this protein is dTTP/UTP pyrophosphatase.